A 143-amino-acid chain; its full sequence is Large ribosomal subunit protein uL15 (143 aa).

Composition is skewed to basic residues over residues 1-13 (MIRKSKKITKMRG) and 23-38 (KKHRGAGHRGGRGNAG). Residues 1 to 38 (MIRKSKKITKMRGSRTCGYGEAKKHRGAGHRGGRGNAG) form a disordered region.

This sequence belongs to the universal ribosomal protein uL15 family. Part of the 50S ribosomal subunit.

Its function is as follows. Binds to the 23S rRNA. This is Large ribosomal subunit protein uL15 from Methanococcus maripaludis (strain C7 / ATCC BAA-1331).